The sequence spans 161 residues: Cyclic pyranopterin monophosphate synthase (161 aa).

Residues L75–H77 and M113–E114 each bind substrate. D128 is a catalytic residue.

Belongs to the MoaC family. In terms of assembly, homohexamer; trimer of dimers.

The enzyme catalyses (8S)-3',8-cyclo-7,8-dihydroguanosine 5'-triphosphate = cyclic pyranopterin phosphate + diphosphate. Its pathway is cofactor biosynthesis; molybdopterin biosynthesis. Its function is as follows. Catalyzes the conversion of (8S)-3',8-cyclo-7,8-dihydroguanosine 5'-triphosphate to cyclic pyranopterin monophosphate (cPMP). This is Cyclic pyranopterin monophosphate synthase from Salmonella typhi.